The sequence spans 194 residues: dTTP/UTP pyrophosphatase (194 aa).

The active-site Proton acceptor is the Asp-73.

It belongs to the Maf family. YhdE subfamily. It depends on a divalent metal cation as a cofactor.

The protein localises to the cytoplasm. The catalysed reaction is dTTP + H2O = dTMP + diphosphate + H(+). It catalyses the reaction UTP + H2O = UMP + diphosphate + H(+). Functionally, nucleoside triphosphate pyrophosphatase that hydrolyzes dTTP and UTP. May have a dual role in cell division arrest and in preventing the incorporation of modified nucleotides into cellular nucleic acids. This chain is dTTP/UTP pyrophosphatase, found in Clostridium botulinum (strain Kyoto / Type A2).